The chain runs to 300 residues: Acetaldehyde dehydrogenase (300 aa).

10–13 (SGNI) lines the NAD(+) pocket. Residue cysteine 129 is the Acyl-thioester intermediate of the active site. Residues 160-168 (SAGPGTRKN) and asparagine 271 contribute to the NAD(+) site.

This sequence belongs to the acetaldehyde dehydrogenase family.

The enzyme catalyses acetaldehyde + NAD(+) + CoA = acetyl-CoA + NADH + H(+). The chain is Acetaldehyde dehydrogenase from Alkalilimnicola ehrlichii (strain ATCC BAA-1101 / DSM 17681 / MLHE-1).